Here is a 132-residue protein sequence, read N- to C-terminus: Small ribosomal subunit protein uS8 (132 aa).

Belongs to the universal ribosomal protein uS8 family. In terms of assembly, part of the 30S ribosomal subunit. Contacts proteins S5 and S12.

Its function is as follows. One of the primary rRNA binding proteins, it binds directly to 16S rRNA central domain where it helps coordinate assembly of the platform of the 30S subunit. In Treponema pallidum (strain Nichols), this protein is Small ribosomal subunit protein uS8.